A 138-amino-acid chain; its full sequence is Ribosome-binding factor A (138 aa).

Belongs to the RbfA family. As to quaternary structure, monomer. Binds 30S ribosomal subunits, but not 50S ribosomal subunits or 70S ribosomes.

The protein resides in the cytoplasm. Its function is as follows. One of several proteins that assist in the late maturation steps of the functional core of the 30S ribosomal subunit. Associates with free 30S ribosomal subunits (but not with 30S subunits that are part of 70S ribosomes or polysomes). Required for efficient processing of 16S rRNA. May interact with the 5'-terminal helix region of 16S rRNA. This Pseudoalteromonas atlantica (strain T6c / ATCC BAA-1087) protein is Ribosome-binding factor A.